An 81-amino-acid polypeptide reads, in one-letter code: Cytotoxin 8 (81 aa).

An N-terminal signal peptide occupies residues 1-21 (MKTLLLTLVVVTIVCLDLGYT). 4 cysteine pairs are disulfide-bonded: C24/C42, C35/C59, C63/C74, and C75/C80.

This sequence belongs to the three-finger toxin family. Short-chain subfamily. Type IA cytotoxin sub-subfamily. Monomer in solution; Homodimer and oligomer in the presence of negatively charged lipids forming a pore with a size ranging between 20 and 30 Angstroms. In terms of tissue distribution, expressed by the venom gland.

The protein localises to the secreted. It localises to the target cell membrane. In terms of biological role, shows cytolytic activity on many different cells by forming pore in lipid membranes. In vivo, increases heart rate or kills the animal by cardiac arrest. In addition, it binds to heparin with high affinity, interacts with Kv channel-interacting protein 1 (KCNIP1) in a calcium-independent manner, and binds to integrin alpha-V/beta-3 (ITGAV/ITGB3) with moderate affinity. This is Cytotoxin 8 from Naja atra (Chinese cobra).